Here is a 142-residue protein sequence, read N- to C-terminus: Large ribosomal subunit protein uL11 (142 aa).

Belongs to the universal ribosomal protein uL11 family. As to quaternary structure, part of the ribosomal stalk of the 50S ribosomal subunit. Interacts with L10 and the large rRNA to form the base of the stalk. L10 forms an elongated spine to which L12 dimers bind in a sequential fashion forming a multimeric L10(L12)X complex. Post-translationally, one or more lysine residues are methylated.

Functionally, forms part of the ribosomal stalk which helps the ribosome interact with GTP-bound translation factors. This Gamma-proteobacterium EBAC31A08 protein is Large ribosomal subunit protein uL11.